A 585-amino-acid chain; its full sequence is Eukaryotic translation initiation factor 3 subunit D (585 aa).

A compositionally biased stretch (gly residues) spans 110–130; that stretch reads GGGTVFRGRGQRGVGQRGGRA. The tract at residues 110 to 152 is disordered; that stretch reads GGGTVFRGRGQRGVGQRGGRAGFQRVGAGRGQGGDRYYDNRSA. The segment at 300-314 is RNA gate; it reads SIDLVTVNENAADAP. Positions 560-585 are disordered; that stretch reads VPPNTFEEDDEAAEEQEEKAEDESEE. Over residues 565-585 the composition is skewed to acidic residues; the sequence is FEEDDEAAEEQEEKAEDESEE.

It belongs to the eIF-3 subunit D family. As to quaternary structure, component of the eukaryotic translation initiation factor 3 (eIF-3) complex.

It localises to the cytoplasm. In terms of biological role, mRNA cap-binding component of the eukaryotic translation initiation factor 3 (eIF-3) complex, which is involved in protein synthesis of a specialized repertoire of mRNAs and, together with other initiation factors, stimulates binding of mRNA and methionyl-tRNAi to the 40S ribosome. The eIF-3 complex specifically targets and initiates translation of a subset of mRNAs involved in cell proliferation. In the eIF-3 complex, eif3d specifically recognizes and binds the 7-methylguanosine cap of a subset of mRNAs. The protein is Eukaryotic translation initiation factor 3 subunit D of Aspergillus fumigatus (strain CBS 144.89 / FGSC A1163 / CEA10) (Neosartorya fumigata).